The sequence spans 411 residues: Glutamyl-tRNA reductase (411 aa).

Substrate-binding positions include 48–51, Ser-106, 111–113, and Gln-117; these read TCNR and EDQ. The active-site Nucleophile is Cys-49. 186 to 191 contacts NADP(+); the sequence is GAGDMG.

Belongs to the glutamyl-tRNA reductase family. In terms of assembly, homodimer.

The enzyme catalyses (S)-4-amino-5-oxopentanoate + tRNA(Glu) + NADP(+) = L-glutamyl-tRNA(Glu) + NADPH + H(+). Its pathway is porphyrin-containing compound metabolism; protoporphyrin-IX biosynthesis; 5-aminolevulinate from L-glutamyl-tRNA(Glu): step 1/2. Catalyzes the NADPH-dependent reduction of glutamyl-tRNA(Glu) to glutamate 1-semialdehyde (GSA). This Clostridium novyi (strain NT) protein is Glutamyl-tRNA reductase.